We begin with the raw amino-acid sequence, 304 residues long: Dihydroorotate dehydrogenase B (NAD(+)), catalytic subunit (304 aa).

FMN contacts are provided by residues Ser21 and 45 to 46; that span reads KA. Substrate-binding positions include Lys45 and 69 to 73; that span reads NAIGL. FMN-binding residues include Asn99 and Asn127. Position 127 (Asn127) interacts with substrate. Cys130 functions as the Nucleophile in the catalytic mechanism. FMN contacts are provided by Lys165 and Ile191. 192–193 contacts substrate; sequence NT. Residues Gly217, 243–244, and 265–266 each bind FMN; these read GG and GT.

The protein belongs to the dihydroorotate dehydrogenase family. Type 1 subfamily. In terms of assembly, heterotetramer of 2 PyrK and 2 PyrD type B subunits. FMN serves as cofactor.

Its subcellular location is the cytoplasm. The catalysed reaction is (S)-dihydroorotate + NAD(+) = orotate + NADH + H(+). The protein operates within pyrimidine metabolism; UMP biosynthesis via de novo pathway; orotate from (S)-dihydroorotate (NAD(+) route): step 1/1. Catalyzes the conversion of dihydroorotate to orotate with NAD(+) as electron acceptor. The protein is Dihydroorotate dehydrogenase B (NAD(+)), catalytic subunit (pyrD) of Shouchella clausii (strain KSM-K16) (Alkalihalobacillus clausii).